We begin with the raw amino-acid sequence, 206 residues long: Protein GrpE (206 aa).

It belongs to the GrpE family. As to quaternary structure, homodimer.

The protein localises to the cytoplasm. Functionally, participates actively in the response to hyperosmotic and heat shock by preventing the aggregation of stress-denatured proteins, in association with DnaK and GrpE. It is the nucleotide exchange factor for DnaK and may function as a thermosensor. Unfolded proteins bind initially to DnaJ; upon interaction with the DnaJ-bound protein, DnaK hydrolyzes its bound ATP, resulting in the formation of a stable complex. GrpE releases ADP from DnaK; ATP binding to DnaK triggers the release of the substrate protein, thus completing the reaction cycle. Several rounds of ATP-dependent interactions between DnaJ, DnaK and GrpE are required for fully efficient folding. The polypeptide is Protein GrpE (Shewanella sp. (strain W3-18-1)).